A 282-amino-acid chain; its full sequence is ATP synthase gamma chain (282 aa).

This sequence belongs to the ATPase gamma chain family. F-type ATPases have 2 components, CF(1) - the catalytic core - and CF(0) - the membrane proton channel. CF(1) has five subunits: alpha(3), beta(3), gamma(1), delta(1), epsilon(1). CF(0) has three main subunits: a, b and c.

It is found in the cell membrane. Its function is as follows. Produces ATP from ADP in the presence of a proton gradient across the membrane. The gamma chain is believed to be important in regulating ATPase activity and the flow of protons through the CF(0) complex. In Clostridium botulinum (strain Loch Maree / Type A3), this protein is ATP synthase gamma chain.